A 199-amino-acid chain; its full sequence is MKFSPLVDELIQALKGLPGVGPKSAQRMAFNLLERDRKVGLKLAESLKNAMTDVGHCQSCRTFTEQSLCPICASHKRGASGVICVVETPADVLAIEAGGHFNGRYFVLLGHLSPLDGVGPEELGLSLLEQHLQTLDVTELILATNPTVEGDATAHFIADMARRHKVIISRIAHGVPVGGELEYVDSTTLALSFNGRIAL.

A C4-type zinc finger spans residues 57 to 72; the sequence is CQSCRTFTEQSLCPIC. Residues 81-176 form the Toprim domain; the sequence is GVICVVETPA…IISRIAHGVP (96 aa).

Belongs to the RecR family.

Its function is as follows. May play a role in DNA repair. It seems to be involved in an RecBC-independent recombinational process of DNA repair. It may act with RecF and RecO. This chain is Recombination protein RecR, found in Shewanella denitrificans (strain OS217 / ATCC BAA-1090 / DSM 15013).